Consider the following 278-residue polypeptide: uncharacterized protein (278 aa).

NAD(+) contacts are provided by residues 112–113 (HI), 191–193 (VGR), and Asp217. The active site involves Arg193. Residue Glu222 is part of the active site. The active-site Proton donor is the His241. 241-244 (HSAG) is an NAD(+) binding site.

It belongs to the D-isomer specific 2-hydroxyacid dehydrogenase family.

This is an uncharacterized protein from Streptomyces coelicolor.